The following is a 483-amino-acid chain: Regulatory protein ViaA (483 aa).

The protein belongs to the ViaA family. In terms of assembly, homodimer. Interacts with RavA.

It localises to the cytoplasm. Component of the RavA-ViaA chaperone complex, which may act on the membrane to optimize the function of some of the respiratory chains. ViaA stimulates the ATPase activity of RavA. In Escherichia coli O139:H28 (strain E24377A / ETEC), this protein is Regulatory protein ViaA.